Consider the following 206-residue polypeptide: Ras-related protein RABH1a (206 aa).

Position 14-21 (14-21) interacts with GTP; that stretch reads GDQGVGKT. The Effector region motif lies at 36–44; sequence YQATIGIDF. Residues 62–66, 120–123, and 150–151 each bind GTP; these read DTAGQ, NKTD, and SA. 2 S-geranylgeranyl cysteine lipidation sites follow: Cys204 and Cys206. The residue at position 206 (Cys206) is a Cysteine methyl ester.

This sequence belongs to the small GTPase superfamily. Rab family.

The protein resides in the golgi apparatus membrane. In terms of biological role, protein transport. Regulator of membrane traffic from the Golgi apparatus towards the endoplasmic reticulum (ER). The protein is Ras-related protein RABH1a (RABH1A) of Arabidopsis thaliana (Mouse-ear cress).